The primary structure comprises 248 residues: Probable transcriptional regulatory protein PP_1214 (248 aa).

A disordered region spans residues 1-21; the sequence is MAGHSKWANIKHRKERQDAKR.

This sequence belongs to the TACO1 family.

It is found in the cytoplasm. This Pseudomonas putida (strain ATCC 47054 / DSM 6125 / CFBP 8728 / NCIMB 11950 / KT2440) protein is Probable transcriptional regulatory protein PP_1214.